The chain runs to 325 residues: Aspartate carbamoyltransferase catalytic subunit (325 aa).

Carbamoyl phosphate-binding residues include arginine 64 and threonine 65. Lysine 92 serves as a coordination point for L-aspartate. Arginine 114, histidine 142, and glutamine 145 together coordinate carbamoyl phosphate. The L-aspartate site is built by arginine 176 and arginine 230. Residues glycine 271 and proline 272 each contribute to the carbamoyl phosphate site.

The protein belongs to the aspartate/ornithine carbamoyltransferase superfamily. ATCase family. In terms of assembly, heterododecamer (2C3:3R2) of six catalytic PyrB chains organized as two trimers (C3), and six regulatory PyrI chains organized as three dimers (R2).

It carries out the reaction carbamoyl phosphate + L-aspartate = N-carbamoyl-L-aspartate + phosphate + H(+). It participates in pyrimidine metabolism; UMP biosynthesis via de novo pathway; (S)-dihydroorotate from bicarbonate: step 2/3. Functionally, catalyzes the condensation of carbamoyl phosphate and aspartate to form carbamoyl aspartate and inorganic phosphate, the committed step in the de novo pyrimidine nucleotide biosynthesis pathway. The chain is Aspartate carbamoyltransferase catalytic subunit from Nitratidesulfovibrio vulgaris (strain DSM 19637 / Miyazaki F) (Desulfovibrio vulgaris).